Here is a 427-residue protein sequence, read N- to C-terminus: Serine--tRNA ligase (427 aa).

An L-serine-binding site is contributed by 231-233 (TAE). Residue 262 to 264 (RSE) participates in ATP binding. Glu-285 lines the L-serine pocket. 349–352 (EISS) is a binding site for ATP. Ser-385 contacts L-serine.

The protein belongs to the class-II aminoacyl-tRNA synthetase family. Type-1 seryl-tRNA synthetase subfamily. In terms of assembly, homodimer. The tRNA molecule binds across the dimer.

Its subcellular location is the cytoplasm. It carries out the reaction tRNA(Ser) + L-serine + ATP = L-seryl-tRNA(Ser) + AMP + diphosphate + H(+). It catalyses the reaction tRNA(Sec) + L-serine + ATP = L-seryl-tRNA(Sec) + AMP + diphosphate + H(+). Its pathway is aminoacyl-tRNA biosynthesis; selenocysteinyl-tRNA(Sec) biosynthesis; L-seryl-tRNA(Sec) from L-serine and tRNA(Sec): step 1/1. In terms of biological role, catalyzes the attachment of serine to tRNA(Ser). Is also able to aminoacylate tRNA(Sec) with serine, to form the misacylated tRNA L-seryl-tRNA(Sec), which will be further converted into selenocysteinyl-tRNA(Sec). The polypeptide is Serine--tRNA ligase (Listeria innocua serovar 6a (strain ATCC BAA-680 / CLIP 11262)).